The sequence spans 174 residues: Small ribosomal subunit protein uS5 (174 aa).

The region spanning Phe-16–Val-79 is the S5 DRBM domain.

This sequence belongs to the universal ribosomal protein uS5 family. In terms of assembly, part of the 30S ribosomal subunit. Contacts proteins S4 and S8.

In terms of biological role, with S4 and S12 plays an important role in translational accuracy. Its function is as follows. Located at the back of the 30S subunit body where it stabilizes the conformation of the head with respect to the body. The protein is Small ribosomal subunit protein uS5 of Ehrlichia canis (strain Jake).